A 640-amino-acid chain; its full sequence is 1-deoxy-D-xylulose-5-phosphate synthase (640 aa).

Thiamine diphosphate is bound by residues histidine 79 and 120 to 122 (AHS). Aspartate 151 contributes to the Mg(2+) binding site. Thiamine diphosphate-binding positions include 152 to 153 (GA), asparagine 180, tyrosine 289, and glutamate 371. Asparagine 180 provides a ligand contact to Mg(2+).

This sequence belongs to the transketolase family. DXPS subfamily. In terms of assembly, homodimer. Requires Mg(2+) as cofactor. The cofactor is thiamine diphosphate.

It carries out the reaction D-glyceraldehyde 3-phosphate + pyruvate + H(+) = 1-deoxy-D-xylulose 5-phosphate + CO2. It participates in metabolic intermediate biosynthesis; 1-deoxy-D-xylulose 5-phosphate biosynthesis; 1-deoxy-D-xylulose 5-phosphate from D-glyceraldehyde 3-phosphate and pyruvate: step 1/1. Functionally, catalyzes the acyloin condensation reaction between C atoms 2 and 3 of pyruvate and glyceraldehyde 3-phosphate to yield 1-deoxy-D-xylulose-5-phosphate (DXP). The protein is 1-deoxy-D-xylulose-5-phosphate synthase of Novosphingobium aromaticivorans (strain ATCC 700278 / DSM 12444 / CCUG 56034 / CIP 105152 / NBRC 16084 / F199).